We begin with the raw amino-acid sequence, 278 residues long: Large ribosomal subunit protein uL2 (278 aa).

Disordered regions lie at residues 29–53 (PEKS…TTRH) and 223–278 (GVAM…GKKR). Positions 255 to 268 (GRTRRPGKESDKLI) are enriched in basic and acidic residues. The segment covering 269–278 (VRRRRTGKKR) has biased composition (basic residues).

It belongs to the universal ribosomal protein uL2 family. In terms of assembly, part of the 50S ribosomal subunit. Forms a bridge to the 30S subunit in the 70S ribosome.

Functionally, one of the primary rRNA binding proteins. Required for association of the 30S and 50S subunits to form the 70S ribosome, for tRNA binding and peptide bond formation. It has been suggested to have peptidyltransferase activity; this is somewhat controversial. Makes several contacts with the 16S rRNA in the 70S ribosome. This Kineococcus radiotolerans (strain ATCC BAA-149 / DSM 14245 / SRS30216) protein is Large ribosomal subunit protein uL2.